We begin with the raw amino-acid sequence, 315 residues long: Phosphatidylglycerol--prolipoprotein diacylglyceryl transferase (315 aa).

Helical transmembrane passes span Phe19–Leu39 and Val93–Leu113. A 1,2-diacyl-sn-glycero-3-phospho-(1'-sn-glycerol) is bound at residue Arg141. 2 consecutive transmembrane segments (helical) span residues Leu188–Ile208 and Val256–Tyr276.

It belongs to the Lgt family.

Its subcellular location is the cell membrane. It carries out the reaction L-cysteinyl-[prolipoprotein] + a 1,2-diacyl-sn-glycero-3-phospho-(1'-sn-glycerol) = an S-1,2-diacyl-sn-glyceryl-L-cysteinyl-[prolipoprotein] + sn-glycerol 1-phosphate + H(+). Its pathway is protein modification; lipoprotein biosynthesis (diacylglyceryl transfer). Functionally, catalyzes the transfer of the diacylglyceryl group from phosphatidylglycerol to the sulfhydryl group of the N-terminal cysteine of a prolipoprotein, the first step in the formation of mature lipoproteins. In Bifidobacterium longum (strain NCC 2705), this protein is Phosphatidylglycerol--prolipoprotein diacylglyceryl transferase.